A 296-amino-acid polypeptide reads, in one-letter code: 2-methylisocitrate lyase (296 aa).

Substrate is bound at residue 45 to 47 (SGG). 2 residues coordinate Mg(2+): Asp-85 and Asp-87. Substrate is bound by residues 123–124 (CG), Arg-158, Glu-188, 210–212 (NIT), Arg-241, and Arg-270.

This sequence belongs to the isocitrate lyase/PEP mutase superfamily. Methylisocitrate lyase family. Homotetramer; dimer of dimers. The cofactor is Mg(2+).

It carries out the reaction (2S,3R)-3-hydroxybutane-1,2,3-tricarboxylate = pyruvate + succinate. The protein operates within organic acid metabolism; propanoate degradation. Functionally, involved in the catabolism of short chain fatty acids (SCFA) via the 2-methylcitrate cycle I (propionate degradation route). Catalyzes the thermodynamically favored C-C bond cleavage of (2R,3S)-2-methylisocitrate to yield pyruvate and succinate via an alpha-carboxy-carbanion intermediate. The polypeptide is 2-methylisocitrate lyase (Escherichia coli (strain K12)).